A 784-amino-acid chain; its full sequence is MSDQDHSMDEVTAVVKIEKDVGGNNGGSGNGGGAAFSQTRSSSTGSSSSSGGGGGQESQPSPLALLAATCSRIESPNENSNNSQGPSQSGGTGELDLTATQLSQGANGWQIISSSSGATPTSKEQSGNSTNGSNGSESSKNRTVSGGQYVVAATPNLQNQQVLTGLPGVMPNIQYQVIPQFQTVDGQQLQFAATGAQVQQDGSGQIQIIPGANQQIIPNRGSGGNIIAAMPNLLQQAVPLQGLANNVLSGQTQYVTNVPVALNGNITLLPVNSVSAATLTPSSQAGTISSSGSQESSSQPVTSGTAISSASLVSSQASSSSFFTNANSYSTTTTTSNMGIMNFTSSGSSGTSSQGQTPQRVGGLQGSDSLNIQQNQTSGGSLQGSQQKEGEQSQQTQQQQILIQPQLVQGGQALQALQAAPLSGQTFTTQAISQETLQNLQLQAVQNSGPIIIRTPTVGPNGQVSWQTLQLQNLQVQNPQAQTITLAPMQGVSLGQTSSSNTTLTPIASAASIPAGTVTVNAAQLSSMPGLQTINLSALGTSGIQVHQLPGLPLAIANTPGDHGTQLGLHGSGGDGIHDETAGGEGENSSDLQPQAGRRTRREACTCPYCKDSEGRASGDPGKKKQHICHIQGCGKVYGKTSHLRAHLRWHTGERPFMCNWSYCGKRFTRSDELQRHKRTHTGEKKFACPECPKRFMRSDHLSKHIKTHQNKKGGPGVALSVGTLPLDSGAGSEGTATPSALITTNMVAMEAICPEGIARLANSGINVMQVTELQSINISGNGF.

Residues methionine 1–leucine 95 are disordered. N-acetylserine is present on serine 2. Residues serine 2 and serine 7 each carry the phosphoserine modification. The repressor domain stretch occupies residues serine 2 to glutamine 84. Lysine 16 is covalently cross-linked (Glycyl lysine isopeptide (Lys-Gly) (interchain with G-Cter in SUMO); alternate). Lysine 16 participates in a covalent cross-link: Glycyl lysine isopeptide (Lys-Gly) (interchain with G-Cter in SUMO2); alternate. Positions glycine 23–alanine 34 are enriched in gly residues. Positions serine 37 to serine 49 are enriched in low complexity. Serine 61 bears the Phosphoserine mark. Residues glutamate 74–serine 87 are compositionally biased toward low complexity. Serine 103 carries the post-translational modification Phosphoserine; by ATM. Residues isoleucine 111–glutamine 125 show a composition bias toward polar residues. A disordered region spans residues isoleucine 111–valine 144. Residues serine 126–serine 138 are compositionally biased toward low complexity. Positions glutamine 148–glutamine 253 are transactivation domain A (Gln-rich). The segment at asparagine 263–threonine 497 is transactivation domain B (Gln-rich). Threonine 280 is modified (phosphothreonine; by MAPK8). Disordered regions lie at residues serine 282–serine 303 and threonine 333–glutamine 398. Composition is skewed to low complexity over residues threonine 344–threonine 357 and glutamine 373–glutamine 398. Phosphothreonine; by MAPK1 and MAPK3 is present on threonine 455. The 9aaTAD signature appears at valine 464–glutamine 472. An O-linked (GlcNAc) serine glycan is attached at serine 493. Positions serine 498 to lysine 611 are transactivation domain C (highly charged). Positions glutamine 566–arginine 598 are disordered. Serine 613 carries the phosphoserine; alternate modification. Residue serine 613 is glycosylated (O-linked (GlcNAc) serine; alternate). The tract at residues aspartate 620–phenylalanine 784 is VZV IE62-binding. 3 C2H2-type zinc fingers span residues histidine 627–proline 656, phenylalanine 657–lysine 686, and phenylalanine 687–glycine 714. Position 641 is a phosphothreonine; alternate (threonine 641). Threonine 641 is a glycosylation site (O-linked (GlcNAc) threonine; alternate). Serine 642 carries O-linked (GlcNAc) serine; alternate glycosylation. The residue at position 642 (serine 642) is a Phosphoserine; by PKC/PRKCZ; alternate. Threonine 652 carries the post-translational modification Phosphothreonine; by PKC/PRKCZ. A Phosphothreonine modification is found at threonine 669. The residue at position 671 (serine 671) is a Phosphoserine; by PKC/PRKCZ. Threonine 682 carries the phosphothreonine; by PKC/PRKCZ modification. A phosphoserine; alternate mark is found at serine 699 and serine 703. O-linked (GlcNAc) serine; alternate glycans are attached at residues serine 699 and serine 703. Residue lysine 704 is modified to N6-acetyllysine. The tract at residues histidine 709 to phenylalanine 784 is domain D. Position 738 is a phosphothreonine; by MAPK1, MAPK3 and MAPK8 (threonine 738).

Belongs to the Sp1 C2H2-type zinc-finger protein family. As to quaternary structure, interacts with ATF7IP, ATF7IP2, BAHD1, POGZ, HCFC1, AATF and PHC2. Interacts with SV40 VP2/3 proteins. Interacts with SV40 major capsid protein VP1; this interaction leads to a cooperativity between the 2 proteins in DNA binding. Interacts with HLTF; the interaction may be required for basal transcriptional activity of HLTF. Interacts (deacetylated form) with EP300; the interaction enhances gene expression. Interacts with HDAC1 and JUN. Interacts with ELF1; the interaction is inhibited by glycosylation of SP1. Interaction with NFYA; the interaction is inhibited by glycosylation of SP1. Interacts with SMARCA4/BRG1. Interacts with ATF7IP and TBP. Interacts with MEIS2 isoform 4 and PBX1 isoform PBX1a. Interacts with EGR1. Interacts with RNF112 in an oxidative stress-regulated manner. Interacts with ZBTB7A; ZBTB7A prevents the binding to GC-rich motifs in promoters and represses the transcriptional activity of SP1. Interacts with DDX3X; this interaction potentiates SP1-induced CDKN1A/WAF1/CIP1 transcription. Interacts with MSX1; the interaction may inhibit MSX1 autoinactivation. Interacts with MSX3. In terms of assembly, (Microbial infection) Interacts with murine minute virus NS1; this interaction allows high levels of viral P38 promoter transactivation by NS1. Post-translationally, phosphorylated on multiple serine and threonine residues. Phosphorylation is coupled to ubiquitination, sumoylation and proteolytic processing. Phosphorylation on Ser-61 enhances proteolytic cleavage. Phosphorylation on Ser-7 enhances ubiquitination and protein degradation. Hyperphosphorylation on Ser-103 in response to DNA damage has no effect on transcriptional activity. MAPK1/MAPK3-mediated phosphorylation on Thr-455 and Thr-738 enhances VEGF transcription but, represses FGF2-triggered PDGFR-alpha transcription. Also implicated in the repression of RECK by ERBB2. Hyperphosphorylated on Thr-280 and Thr-738 during mitosis by MAPK8 shielding SP1 from degradation by the ubiquitin-dependent pathway. Phosphorylated in the zinc-finger domain by calmodulin-activated PKCzeta. Phosphorylation on Ser-642 by PKCzeta is critical for TSA-activated LHR gene expression through release of its repressor, p107. Phosphorylation on Thr-669, Ser-671 and Thr-682 is stimulated by angiotensin II via the AT1 receptor inducing increased binding to the PDGF-D promoter. This phosphorylation is increased in injured artey wall. Ser-61 and Thr-682 can both be dephosphorylated by PP2A during cell-cycle interphase. Dephosphorylation on Ser-61 leads to increased chromatin association during interphase and increases the transcriptional activity. On insulin stimulation, sequentially glycosylated and phosphorylated on several C-terminal serine and threonine residues. Acetylated. Acetylation/deacetylation events affect transcriptional activity. Deacetylation leads to an increase in the expression of the 12(s)-lipooxygenase gene through recruitment of p300 to the promoter. Deacetylated by HDAC6 which leads to increased expression of ENG and positive regulation of angiogenesis. In terms of processing, ubiquitinated. Ubiquitination occurs on the C-terminal proteolytically-cleaved peptide and is triggered by phosphorylation. Post-translationally, sumoylated with SUMO1. Sumoylation modulates proteolytic cleavage of the N-terminal repressor domain. Sumoylation levels are attenuated during tumorigenesis. Phosphorylation mediates SP1 desumoylation. Proteolytic cleavage in the N-terminal repressor domain is prevented by sumoylation. The C-terminal cleaved product is susceptible to degradation. In terms of processing, O-glycosylated; Contains 8 N-acetylglucosamine side chains. Levels are controlled by insulin and the SP1 phosphorylation states. Insulin-mediated O-glycosylation locates SP1 to the nucleus, where it is sequentially deglycosylated and phosphorylated. O-glycosylation affects transcriptional activity through disrupting the interaction with a number of transcription factors including ELF1 and NFYA. Inhibited by peroxisomome proliferator receptor gamma (PPARgamma).

Its subcellular location is the nucleus. The protein localises to the cytoplasm. Its function is as follows. Transcription factor that can activate or repress transcription in response to physiological and pathological stimuli. Binds with high affinity to GC-rich motifs and regulates the expression of a large number of genes involved in a variety of processes such as cell growth, apoptosis, differentiation and immune responses. Highly regulated by post-translational modifications (phosphorylations, sumoylation, proteolytic cleavage, glycosylation and acetylation). Also binds the PDGFR-alpha G-box promoter. May have a role in modulating the cellular response to DNA damage. Implicated in chromatin remodeling. Plays a role in the recruitment of SMARCA4/BRG1 on the c-FOS promoter Plays an essential role in the regulation of FE65 gene expression. Positively regulates the transcription of the core clock component BMAL1. Plays a role in protecting cells against oxidative stress following brain injury by regulating the expression of RNF112. In Mus musculus (Mouse), this protein is Transcription factor Sp1 (Sp1).